A 477-amino-acid polypeptide reads, in one-letter code: Pentatricopeptide repeat-containing protein At5g47360 (477 aa).

PPR repeat units lie at residues 129-163 (NVKT…NVCA), 164-198 (DTVA…GLYP), 199-233 (DVIT…DCVL), 234-264 (NSVT…MEKE), 273-307 (NAVT…GCMP), 308-343 (NRVT…GGVS), 344-378 (LSEC…GVRP), 379-413 (DGLA…DVKS), and 416-450 (DSDI…KMRL).

Belongs to the PPR family. P subfamily.

This is Pentatricopeptide repeat-containing protein At5g47360 from Arabidopsis thaliana (Mouse-ear cress).